The sequence spans 344 residues: Protein RecA (344 aa).

65–72 (GPESSGKT) contacts ATP.

It belongs to the RecA family.

The protein resides in the cytoplasm. Can catalyze the hydrolysis of ATP in the presence of single-stranded DNA, the ATP-dependent uptake of single-stranded DNA by duplex DNA, and the ATP-dependent hybridization of homologous single-stranded DNAs. It interacts with LexA causing its activation and leading to its autocatalytic cleavage. The chain is Protein RecA from Xanthomonas oryzae pv. oryzae (strain PXO99A).